The following is a 206-amino-acid chain: Protein GET1 (206 aa).

At 1–4 the chain is on the lumenal side; that stretch reads MPSL. Residues 5–24 traverse the membrane as a helical segment; that stretch reads LITILLLNIVIYVINTIGAA. At 25–110 the chain is on the cytoplasmic side; sequence TIDSLLWLFY…SFDMTVKSVR (86 aa). The stretch at 42–99 forms a coiled coil; the sequence is SHMAREQRRLKREVIQLKREMNATSSQDEFAKWAKLRRRHDKALETYEAKNNELTQCK. Residues 111 to 131 form a helical membrane-spanning segment; it reads WAATSGLMLFLQFWYSKRPIF. The Lumenal segment spans residues 132 to 155; that stretch reads TLPPGWIPWQVQWVLSFPRAPMGT. Residues 156–172 traverse the membrane as a helical segment; that stretch reads VSIQIWGGACATVVALV. The Cytoplasmic segment spans residues 173 to 206; it reads GDAVGATMGFVSASKKEGMKVGAGVGEKEGKKSQ.

Belongs to the WRB/GET1 family. As to quaternary structure, interacts with GET3.

Its subcellular location is the endoplasmic reticulum membrane. Required for the post-translational delivery of tail-anchored (TA) proteins to the endoplasmic reticulum. Acts as a membrane receptor for soluble GET3, which recognizes and selectively binds the transmembrane domain of TA proteins in the cytosol. The sequence is that of Protein GET1 from Ajellomyces dermatitidis (strain ER-3 / ATCC MYA-2586) (Blastomyces dermatitidis).